A 135-amino-acid polypeptide reads, in one-letter code: C-type lectin APL (135 aa).

Cystine bridges form between cysteine 3-cysteine 14, cysteine 31-cysteine 131, cysteine 38-cysteine 133, and cysteine 106-cysteine 123. Residues 10–132 (MNGLCYKIFD…CESKNAFLCQ (123 aa)) form the C-type lectin domain. 5 residues coordinate Ca(2+): glutamine 96, aspartate 98, glutamate 104, asparagine 119, and aspartate 120. The Galactose-binding signature appears at 96 to 98 (QPD).

The protein belongs to the true venom lectin family. In terms of assembly, homodimer; disulfide-linked. Expressed by the venom gland.

The protein resides in the secreted. Its function is as follows. Beta-galactoside lectin that agglutinates rabbit and human erythrocytes in a calcium-dependent fashion (MHC is 0.21 ug/ml on rabbit erythrocytes). Galactose (15 mM), lactose (20 mM), rhamnose (20 mM) and EGTA strongly inhibit this activity. The chain is C-type lectin APL from Agkistrodon piscivorus piscivorus (Eastern cottonmouth).